Reading from the N-terminus, the 72-residue chain is DCLCDCQNQKTEWPELVEKSVEEAKKVILQDKPEAQIIVLPVGTIVTMEYRIDRVRLFVDRLDNIAQVPRVG.

It belongs to the protease inhibitor I13 (potato type I serine protease inhibitor) family.

In terms of biological role, inhibits both subtilisin and chymotrypsin. This chain is Subtilisin-chymotrypsin inhibitor-2B, found in Hordeum vulgare (Barley).